We begin with the raw amino-acid sequence, 219 residues long: Redox-sensing transcriptional repressor Rex (219 aa).

The segment at residues 17–56 is a DNA-binding region (H-T-H motif); it reads RYLRYVEDLLNHDIMRISSSELSQRMGYTASQVRQDFNNF. 91–96 is an NAD(+) binding site; the sequence is GVGNLG.

It belongs to the transcriptional regulatory Rex family. As to quaternary structure, homodimer.

Its subcellular location is the cytoplasm. Modulates transcription in response to changes in cellular NADH/NAD(+) redox state. The chain is Redox-sensing transcriptional repressor Rex from Caldicellulosiruptor saccharolyticus (strain ATCC 43494 / DSM 8903 / Tp8T 6331).